A 179-amino-acid polypeptide reads, in one-letter code: RNA polymerase sigma-E factor (179 aa).

The short motif at 36-49 (DLLQTALVRTYGRW) is the Polymerase core binding element. The segment at residues 130 to 149 (TEETAAALGMSAGTVKSTLH) is a DNA-binding region (H-T-H motif).

Belongs to the sigma-70 factor family. ECF subfamily.

It is found in the cytoplasm. Functionally, sigma factors are initiation factors that promote the attachment of RNA polymerase to specific initiation sites and are then released. This sigma factor is required for normal cell wall integrity; it is recruited by RNA polymerase to transcribe genes with cell wall-related functions. In Streptomyces avermitilis (strain ATCC 31267 / DSM 46492 / JCM 5070 / NBRC 14893 / NCIMB 12804 / NRRL 8165 / MA-4680), this protein is RNA polymerase sigma-E factor (sigE).